We begin with the raw amino-acid sequence, 424 residues long: Serpin A11 (424 aa).

A signal peptide spans 1–21; the sequence is MGPVWLWLWLLVAEVLLPVHC. N-linked (GlcNAc...) asparagine glycosylation is found at Asn108, Asn171, Asn352, and Asn387.

This sequence belongs to the serpin family.

The protein localises to the secreted. This chain is Serpin A11 (Serpina11), found in Mus musculus (Mouse).